Here is a 298-residue protein sequence, read N- to C-terminus: 4-diphosphocytidyl-2-C-methyl-D-erythritol kinase (298 aa).

K19 is an active-site residue. An ATP-binding site is contributed by 106-116; the sequence is PVASGIGGGSA. The active site involves D148.

This sequence belongs to the GHMP kinase family. IspE subfamily.

It catalyses the reaction 4-CDP-2-C-methyl-D-erythritol + ATP = 4-CDP-2-C-methyl-D-erythritol 2-phosphate + ADP + H(+). Its pathway is isoprenoid biosynthesis; isopentenyl diphosphate biosynthesis via DXP pathway; isopentenyl diphosphate from 1-deoxy-D-xylulose 5-phosphate: step 3/6. Catalyzes the phosphorylation of the position 2 hydroxy group of 4-diphosphocytidyl-2C-methyl-D-erythritol. This chain is 4-diphosphocytidyl-2-C-methyl-D-erythritol kinase, found in Rhizobium leguminosarum bv. trifolii (strain WSM2304).